Reading from the N-terminus, the 460-residue chain is Ammonium transporter Rh type C (460 aa).

The Cytoplasmic portion of the chain corresponds to 1-9 (MAWNTNLRW). A helical membrane pass occupies residues 10–30 (RLPLTCLLLQVIMVILFGVFV). Over 31–61 (RYDPDADAHWIDERLGRNISSDMDNEFYYRY) the chain is Extracellular. A glycan (N-linked (GlcNAc...) asparagine) is linked at N48. Residues 62-82 (PSFQDVHVMIFVGFGFLMTFL) form a helical membrane-spanning segment. At 83–86 (QRYG) the chain is on the cytoplasmic side. The helical transmembrane segment at 87–107 (FSSVGFNFLLAAFGIQWALLM) threads the bilayer. At 108 to 125 (QGWLHSFHSGYIVLGVEN) the chain is on the extracellular side. A helical membrane pass occupies residues 126-145 (LINADFCVGSVCVAFGAVLG). The Cytoplasmic segment spans residues 146-151 (KVSPVQ). A helical transmembrane segment spans residues 152–174 (LLIMTLFQVTLFSVNEFILLNLL). Topologically, residues 175–179 (EVKDA) are extracellular. The chain crosses the membrane as a helical span at residues 180–200 (GGSMTIHTFGAYFGLTVTWIL). The Cytoplasmic segment spans residues 201–219 (YRPNLYQSKERQSSVYHSD). A helical membrane pass occupies residues 220 to 240 (LFAMIGTLFLWMYWPSFNSAV). The Extracellular portion of the chain corresponds to 241 to 251 (SHHGDAQHRAA). A helical membrane pass occupies residues 252–272 (INTYCSLAACVLTSVALSSAL). Topologically, residues 273 to 285 (HKKGKLDMVHIQN) are cytoplasmic. A helical membrane pass occupies residues 286–306 (ATLAGGVAVGTAAEMMLMPYG). Residue S307 is a topological domain, extracellular. A helical membrane pass occupies residues 308 to 328 (LIVGFICGIISTLGFVYLTPF). At 329–340 (LESRLRIQDTCG) the chain is on the cytoplasmic side. Residues 341–361 (IHNLHGMPGIIGGIVGAVTAA) form a helical membrane-spanning segment. Residues 362-396 (SANTQQYGQKGLAHAFDIDATKTTWTASMQGSFQA) are Extracellular-facing. Residues 397-417 (AGLFVSLAMALVGGLIVGVIL) traverse the membrane as a helical segment. The Cytoplasmic segment spans residues 418–460 (KLPFWGQPADENCFEDAIYWEIPEDQKSLVSRSEDPTLRPTEP).

The protein belongs to the ammonium transporter (TC 2.A.49) family. Rh subfamily. As to quaternary structure, homotrimer. N-glycosylated.

It is found in the cell membrane. The protein localises to the apical cell membrane. It catalyses the reaction NH4(+)(in) = NH4(+)(out). The enzyme catalyses methylamine(out) = methylamine(in). It carries out the reaction CO2(out) = CO2(in). In terms of biological role, ammonium transporter involved in the maintenance of acid-base homeostasis. Transports ammonium and its related derivative methylammonium across the plasma membrane of epithelial cells likely contributing to renal transepithelial ammonia transport and ammonia metabolism. Postulated to primarily mediate an electroneutral bidirectional transport of NH3 ammonia species according to a mechanism that implies interaction of an NH4(+) ion with acidic residues of the pore entry followed by dissociation of NH4(+) into NH3 and H(+). As a result NH3 transits through the central pore and is protonated on the extracellular side reforming NH4(+). May act as a CO2 channel providing for renal acid secretion. The protein is Ammonium transporter Rh type C (RHCG) of Sus scrofa (Pig).